We begin with the raw amino-acid sequence, 131 residues long: ER membrane protein complex subunit 5 (131 aa).

The Cytoplasmic portion of the chain corresponds to methionine 1 to proline 3. The chain crosses the membrane as a helical span at residues serine 4–phenylalanine 22. Residues serine 23 to isoleucine 43 are Lumenal-facing. The chain crosses the membrane as a helical span at residues aspartate 44–isoleucine 63. Topologically, residues alanine 64–arginine 131 are cytoplasmic. Serine 120 carries the post-translational modification Phosphoserine.

Belongs to the membrane magnesium transporter (TC 1.A.67) family. In terms of assembly, component of the ER membrane protein complex (EMC).

It localises to the endoplasmic reticulum membrane. It is found in the golgi apparatus membrane. The protein localises to the early endosome membrane. In terms of biological role, part of the endoplasmic reticulum membrane protein complex (EMC) that enables the energy-independent insertion into endoplasmic reticulum membranes of newly synthesized membrane proteins. Preferentially accommodates proteins with transmembrane domains that are weakly hydrophobic or contain destabilizing features such as charged and aromatic residues. Involved in the cotranslational insertion of multi-pass membrane proteins in which stop-transfer membrane-anchor sequences become ER membrane spanning helices. It is also required for the post-translational insertion of tail-anchored/TA proteins in endoplasmic reticulum membranes. By mediating the proper cotranslational insertion of N-terminal transmembrane domains in an N-exo topology, with translocated N-terminus in the lumen of the ER, controls the topology of multi-pass membrane proteins like the G protein-coupled receptors. By regulating the insertion of various proteins in membranes, it is indirectly involved in many cellular processes. May be involved in Mg(2+) transport. This Homo sapiens (Human) protein is ER membrane protein complex subunit 5.